The primary structure comprises 299 residues: Prohibitin-2 (299 aa).

The residue at position 2 (alanine 2) is an N-acetylalanine. The tract at residues 19-49 is necessary for transcriptional repression; that stretch reads MGTALKLLLGAGAVAYGIRESVFTVEGGHRA. At tyrosine 128 the chain carries Phosphotyrosine. At lysine 147 the chain carries N6-acetyllysine. Residues 150–174 are necessary for transcriptional repression; sequence ASQLITQRAQVSLLIRRELTERAKD. Serine 151 is modified (phosphoserine). Positions 190–238 form a coiled coil; sequence SREYTAAVEAKQVAQQEAQRAQFLVEKAKQEQRQKIVQAEGEAEAARML. Residues lysine 200, lysine 250, and lysine 262 each carry the N6-acetyllysine modification.

Belongs to the prohibitin family. In terms of assembly, the mitochondrial prohibitin complex consists of two subunits (PHB1 and PHB2), assembled into a membrane-associated ring-shaped supercomplex of approximately 1 mDa. Interacts with ESR1, HDAC1 and HDAC5. Interacts with ZNF703. Interacts with STOML2. Interacts with ARFGEF3. Interacts with SPHK2. Interacts with COX4I1; the interaction associates PHB2 with COX. Interacts with MAP1LC3B (membrane-bound form LC3-II); the interaction is direct and upon mitochondrial depolarization and proteasome-dependent outer membrane rupture. Interacts with IGFBP6 (via C-terminal domain). Interacts with CLPB. Interacts with CD86 (via cytoplasmic domain); the interactions increases after priming with CD40. Interacts with AFG3L2. Interacts with DNAJC19. Interacts with AKT2; this interaction may be important for myogenic differentiation. In terms of processing, phosphorylated. Tyrosine phosphorylation is indirectly stimulated by IGFBP6.

It is found in the mitochondrion inner membrane. It localises to the cytoplasm. The protein resides in the nucleus. The protein localises to the cell membrane. Functionally, protein with pleiotropic attributes mediated in a cell-compartment- and tissue-specific manner, which include the plasma membrane-associated cell signaling functions, mitochondrial chaperone, and transcriptional co-regulator of transcription factors and sex steroid hormones in the nucleus. In terms of biological role, in the mitochondria, together with PHB, forms large ring complexes (prohibitin complexes) in the inner mitochondrial membrane (IMM) and functions as a chaperone protein that stabilizes mitochondrial respiratory enzymes and maintains mitochondrial integrity in the IMM, which is required for mitochondrial morphogenesis, neuronal survival, and normal lifespan. The prohibitin complex, with DNAJC19, regulates cardiolipin remodeling and the protein turnover of OMA1 in a cardiolipin-binding manner. Also regulates cytochrome-c oxidase assembly (COX) and mitochondrial respiration. Binding to sphingoid 1-phosphate (SPP) modulates its regulator activity. Has a key role of mitophagy receptor involved in targeting mitochondria for autophagic degradation. Involved in mitochondrial-mediated antiviral innate immunity, activates RIG-I-mediated signal transduction and production of IFNB1 and pro-inflammatory cytokine IL6. Its function is as follows. In the nucleus, serves as transcriptional co-regulator. Acts as a mediator of transcriptional repression by nuclear hormone receptors via recruitment of histone deacetylases. Functions as an estrogen receptor (ER)-selective coregulator that potentiates the inhibitory activities of antiestrogens and represses the activity of estrogens. Competes with NCOA1 for modulation of ER transcriptional activity. In the plasma membrane, is involved in IGFBP6-induced cell migration. Cooperates with CD86 to mediate CD86-signaling in B lymphocytes that regulates the level of IgG1 produced through the activation of distal signaling intermediates. Upon CD40 engagement, required to activate NF-kappa-B signaling pathway via phospholipase C and protein kinase C activation. This is Prohibitin-2 (PHB2) from Bos taurus (Bovine).